Reading from the N-terminus, the 1090-residue chain is Protein CHROMATIN REMODELING 24 (1090 aa).

Disordered regions lie at residues 1-51 and 247-273; these read MAEN…MIKL and VGKQ…NLDR. The Nuclear localization signal signature appears at 44–51; that stretch reads TKKSMIKL. The segment covering 256–273 has biased composition (basic and acidic residues); that stretch reads RHFDDNSEDNRQGYNLDR. The Helicase ATP-binding domain occupies 389-564; that stretch reads WSLHTQGKGG…WALFNFSCPG (176 aa). 402–409 serves as a coordination point for ATP; the sequence is DDMGLGKT. The DEAH box signature appears at 515-518; that stretch reads DEGH. Residues 736–895 form the Helicase C-terminal domain; the sequence is FIMSLLENLI…IRYFSQQDLR (160 aa). Residues 1043–1069 are a coiled coil; it reads DGGAKIQKQIAELTRELKDMKAAERIN.

It belongs to the SNF2/RAD54 helicase family.

Its subcellular location is the nucleus. Its function is as follows. DNA helicase that acts as an essential component of the spindle assembly checkpoint. Probable chromatin remodeling factor that regulate homologous recombination (HR) and non-homologous recombination (NHR). The protein is Protein CHROMATIN REMODELING 24 of Arabidopsis thaliana (Mouse-ear cress).